Consider the following 372-residue polypeptide: Delta-type opioid receptor (372 aa).

Residues 1–47 are Extracellular-facing; sequence MEPVPSARAELQFSLLANVSDTFPSAFPSASANASGSPGARSASSLA. N-linked (GlcNAc...) asparagine glycosylation is found at N18 and N33. The helical transmembrane segment at 48 to 75 threads the bilayer; it reads LAIAITALYSAVCAVGLLGNVLVMFGIV. Topologically, residues 76 to 85 are cytoplasmic; it reads RYTKLKTATN. The chain crosses the membrane as a helical span at residues 86-110; the sequence is IYIFNLALADALATSTLPFQSAKYL. At 111-122 the chain is on the extracellular side; the sequence is METWPFGELLCK. C121 and C198 are oxidised to a cystine. A helical membrane pass occupies residues 123-144; that stretch reads AVLSIDYYNMFTSIFTLTMMSV. Residues 145 to 163 lie on the Cytoplasmic side of the membrane; the sequence is DRYIAVCHPVKALDFRTPA. The chain crosses the membrane as a helical span at residues 164 to 186; that stretch reads KAKLINICIWVLASGVGVPIMVM. At 187–206 the chain is on the extracellular side; it reads AVTQPRDGAVVCTLQFPSPS. Residues 207–238 traverse the membrane as a helical segment; that stretch reads WYWDTVTKICVFLFAFVVPILIITVCYGLMLL. At 239–261 the chain is on the cytoplasmic side; sequence RLRSVRLLSGSKEKDRSLRRITR. The helical transmembrane segment at 262–284 threads the bilayer; the sequence is MVLVVVGAFVVCWAPIHIFVIVW. The Extracellular segment spans residues 285-299; that stretch reads TLVDINRRDPLVVAA. The helical transmembrane segment at 300-321 threads the bilayer; the sequence is LHLCIALGYANSSLNPVLYAFL. The Cytoplasmic portion of the chain corresponds to 322 to 372; sequence DENFKRCFRQLCRAPCGGQEPGSLRRPRQATARERVTACTPSDGPGGGAAA. A lipid anchor (S-palmitoyl cysteine) is attached at C333. The disordered stretch occupies residues 340-372; it reads QEPGSLRRPRQATARERVTACTPSDGPGGGAAA.

Belongs to the G-protein coupled receptor 1 family. As to quaternary structure, may form homooligomers. Forms a heterodimer with OPRM1. Interacts with GPRASP1. Interacts with RTP4; the interaction promotes cell surface localization of the OPRD1-OPRM1 heterodimer. Ubiquitinated. A basal ubiquitination seems not to be related to degradation. Ubiquitination is increased upon formation of OPRM1:OPRD1 oligomers leading to proteasomal degradation; the ubiquitination is diminished by RTP4. Detected in brain, brain stem and brain cortex.

It is found in the cell membrane. Functionally, G-protein coupled receptor that functions as a receptor for endogenous enkephalins and for a subset of other opioids. Ligand binding causes a conformation change that triggers signaling via guanine nucleotide-binding proteins (G proteins) and modulates the activity of down-stream effectors, such as adenylate cyclase. Signaling leads to the inhibition of adenylate cyclase activity. Inhibits neurotransmitter release by reducing calcium ion currents and increasing potassium ion conductance. Plays a role in the perception of pain and in opiate-mediated analgesia. Plays a role in developing analgesic tolerance to morphine. The polypeptide is Delta-type opioid receptor (Oprd1) (Rattus norvegicus (Rat)).